The sequence spans 132 residues: Small ribosomal subunit protein uS8 (132 aa).

Belongs to the universal ribosomal protein uS8 family. In terms of assembly, part of the 30S ribosomal subunit. Contacts proteins S5 and S12.

In terms of biological role, one of the primary rRNA binding proteins, it binds directly to 16S rRNA central domain where it helps coordinate assembly of the platform of the 30S subunit. The polypeptide is Small ribosomal subunit protein uS8 (Stenotrophomonas maltophilia (strain R551-3)).